Reading from the N-terminus, the 530-residue chain is Probable histone-arginine methyltransferase CARMER (530 aa).

The SAM-dependent MTase PRMT-type domain maps to 141 to 450; the sequence is ASQYFQFYGY…QSYDVTIDLH (310 aa). Residues Q154, R163, G187, E209, E238, and T266 each contribute to the S-adenosyl-L-methionine site. R501 carries the post-translational modification Asymmetric dimethylarginine; by autocatalysis.

Belongs to the class I-like SAM-binding methyltransferase superfamily. Protein arginine N-methyltransferase family. In terms of assembly, homodimer. Interacts with EcR. The dimethylated protein is the major form. As to expression, present ubiquitously (at protein level). Expressed in the imaginal disks and in larval brains, and to a much lesser degree in the polytene larval tissue such as salivary glands.

The protein resides in the cytoplasm. Its subcellular location is the nucleus. It catalyses the reaction L-arginyl-[protein] + 2 S-adenosyl-L-methionine = N(omega),N(omega)-dimethyl-L-arginyl-[protein] + 2 S-adenosyl-L-homocysteine + 2 H(+). Methylates (mono- and asymmetric dimethylation) the guanidino nitrogens of arginyl residues in proteins. May methylate histone H3 at 'Arg-17' and activate transcription via chromatin remodeling. Coordinates ecdysone-mediated expression of cell death genes. The protein is Probable histone-arginine methyltransferase CARMER (Art4) of Drosophila melanogaster (Fruit fly).